Here is a 528-residue protein sequence, read N- to C-terminus: MAVLRTMKLKERLVISLGATLVLLTLLLIVDVQMDFGVANRHLLQQQHQKIRLGNDYDGGTGGGGMLHEFKRKFLQKSNASGSKEASTQAGASQSGGATSGQDAAAGASGGAAGPGTSRSTSTRKPTPHDRYADLQKHLLSDEYSHVIVDNAPDVSRDNPTLAEMLHRKASANASNLERFQLRITKKELYGEQDTLVDAVLRDMIKLPIQHVVQKEGGTQLKLIIEYPNDIKALMKPMRFPREQQTLPNHFYFTDYERHNAEIAAFHLDRILGFRRAMPVAGRTLNITTEIYQLAEENLLKTFFVSPSLNLCFHGKCSYYCDTSHAICGNPDMLEGSFAAFLPNFESGNRKLWRHPWRRSYHKRKKAQWETDANYCALVRDIPPYDDGRRLYDLMDMAVFDFLTGNMDRHHYETFKVYGNETFPLHLDHGRGFGRPFHDELSILAPVLQCCLIRKSTLVKLLDFHNGPKPLSQLMSESLSQDPVSPVLWQPHLEALDRRTGIILQSIRDCIKRNPPGDVDGSETDVSS.

At 1–12 (MAVLRTMKLKER) the chain is on the cytoplasmic side. Positions 1-76 (MAVLRTMKLK…LHEFKRKFLQ (76 aa)) are excised as a propeptide. Residues 13–33 (LVISLGATLVLLTLLLIVDVQ) traverse the membrane as a helical segment. At 34–528 (MDFGVANRHL…VDGSETDVSS (495 aa)) the chain is on the lumenal side. The segment at 77 to 130 (KSNASGSKEASTQAGASQSGGATSGQDAAAGASGGAAGPGTSRSTSTRKPTPHD) is disordered. Asparagine 79 is a glycosylation site (N-linked (GlcNAc...) asparagine). Positions 86 to 107 (ASTQAGASQSGGATSGQDAAAG) are enriched in low complexity. An N-linked (GlcNAc...) asparagine glycan is attached at asparagine 173. Residues glutamine 220, lysine 236, and glutamate 257 each coordinate ATP. Glutamate 257 serves as a coordination point for Mn(2+). Asparagine 286 carries an N-linked (GlcNAc...) asparagine glycan. 2 cysteine pairs are disulfide-bonded: cysteine 312–cysteine 328 and cysteine 317–cysteine 321. 339 to 342 (AAFL) serves as a coordination point for ATP. Disulfide bonds link cysteine 376–cysteine 450 and cysteine 451–cysteine 510. Aspartate 408 is a catalytic residue. Glutamate 413 is a binding site for ATP. N-linked (GlcNAc...) asparagine glycosylation is present at asparagine 420. Residue aspartate 428 coordinates ATP. Aspartate 428 contacts Mn(2+).

Belongs to the FAM20 family. The cofactor is Mn(2+). As to expression, in embryos, prominently expressed in midline glia, salivary gland, intestine and dorsal vessel (heart). Not associated with biomineralization.

It is found in the golgi apparatus membrane. Its subcellular location is the secreted. It catalyses the reaction L-seryl-[protein] + ATP = O-phospho-L-seryl-[protein] + ADP + H(+). The catalysed reaction is L-threonyl-[protein] + ATP = O-phospho-L-threonyl-[protein] + ADP + H(+). Golgi serine/threonine protein kinase that phosphorylates secretory pathway proteins within Ser-x-Glu/pSer motifs. This chain is Extracellular serine/threonine protein CG31145, found in Drosophila melanogaster (Fruit fly).